We begin with the raw amino-acid sequence, 264 residues long: Stage IV sporulation protein FA (264 aa).

A compositionally biased stretch (basic and acidic residues) spans 1 to 10; that stretch reads MSHRADEIRK. A disordered region spans residues 1–37; the sequence is MSHRADEIRKRLEKRRKQLSGSKRFSTQTVSEKQKPP. Residues 1–72 are Mother cell cytoplasmic-facing; sequence MSHRADEIRK…GKHPLVKTDS (72 aa). Positions 19 to 31 are enriched in polar residues; sequence LSGSKRFSTQTVS. A helical transmembrane segment spans residues 73-90; that stretch reads IILKCLLSACLVLVSAIA. Residues 91 to 264 are Forespore intermembrane space-facing; sequence YKTNIGPVSQ…IDPIQVISFE (174 aa).

In terms of assembly, forms a complex with BofA and SpoIVFB localized in the mother-cell membrane surrounding the forespore. In terms of processing, may be degraded by FtsH. It is stabilized by an ftsH disruption mutant, and in a probably independent fashion, by overexpression of BofA.

The protein resides in the forespore outer membrane. In terms of biological role, implicated in the coupling of mother cell to forespore gene expression. Required for spore formation at 37 degrees Celsius, but not at 30 degrees Celsius. SpoIVFA plays a central role in both maintaining the SpoIVFA/BofA/SpoIVFB complex and anchoring it to the outer forespore membrane. SpoIVFA brings BofA into close proximity to SpoIVFB, allowing BofA to inhibit SpoIVFB. Increased accumulation of SpoIVFA seems to inhibit the activity of SpoIVFB and thus regulates the activation of sigma-K. The polypeptide is Stage IV sporulation protein FA (spoIVFA) (Bacillus subtilis (strain 168)).